Reading from the N-terminus, the 139-residue chain is Ribonuclease homolog (139 aa).

Positions 1-23 are cleaved as a signal peptide; that stretch reads MAMSSLWWTAILLLALTVSMCYG. Residue H34 is the Proton acceptor of the active site. 3 disulfide bridges follow: C49–C102, C64–C111, and C82–C126. 65–69 is a binding site for substrate; the sequence is KSFNT. H133 acts as the Proton donor in catalysis.

The protein belongs to the pancreatic ribonuclease family.

The protein resides in the secreted. In Gallus gallus (Chicken), this protein is Ribonuclease homolog.